The chain runs to 120 residues: Large ribosomal subunit protein uL18 (120 aa).

Belongs to the universal ribosomal protein uL18 family. In terms of assembly, part of the 50S ribosomal subunit; part of the 5S rRNA/L5/L18/L25 subcomplex. Contacts the 5S and 23S rRNAs.

Its function is as follows. This is one of the proteins that bind and probably mediate the attachment of the 5S RNA into the large ribosomal subunit, where it forms part of the central protuberance. This is Large ribosomal subunit protein uL18 from Paramagnetospirillum magneticum (strain ATCC 700264 / AMB-1) (Magnetospirillum magneticum).